Reading from the N-terminus, the 295-residue chain is Pyridoxal 5'-phosphate synthase subunit PdxS (295 aa).

Position 25 (D25) interacts with D-ribose 5-phosphate. The active-site Schiff-base intermediate with D-ribose 5-phosphate is the K82. G154 is a binding site for D-ribose 5-phosphate. R166 is a binding site for D-glyceraldehyde 3-phosphate. Residues G215 and 236–237 (GS) each bind D-ribose 5-phosphate.

This sequence belongs to the PdxS/SNZ family. In the presence of PdxT, forms a dodecamer of heterodimers.

The enzyme catalyses aldehydo-D-ribose 5-phosphate + D-glyceraldehyde 3-phosphate + L-glutamine = pyridoxal 5'-phosphate + L-glutamate + phosphate + 3 H2O + H(+). It functions in the pathway cofactor biosynthesis; pyridoxal 5'-phosphate biosynthesis. Catalyzes the formation of pyridoxal 5'-phosphate from ribose 5-phosphate (RBP), glyceraldehyde 3-phosphate (G3P) and ammonia. The ammonia is provided by the PdxT subunit. Can also use ribulose 5-phosphate and dihydroxyacetone phosphate as substrates, resulting from enzyme-catalyzed isomerization of RBP and G3P, respectively. The sequence is that of Pyridoxal 5'-phosphate synthase subunit PdxS from Listeria monocytogenes serotype 4b (strain CLIP80459).